The chain runs to 152 residues: Type-1 angiotensin II receptor-associated protein (152 aa).

Residues 1–23 are Extracellular-facing; sequence MELPAVNLKVILLGHWLLTTWGC. A helical transmembrane segment spans residues 24-44; the sequence is IVFSGSYAWANFTILALGVWA. At 45–55 the chain is on the cytoplasmic side; sequence VAQRDSIDAIS. Residues 56 to 76 form a helical membrane-spanning segment; that stretch reads MFLGGLLATIFLDIVHISIFY. The Extracellular portion of the chain corresponds to 77 to 86; the sequence is PRAGLTDTGR. Residues 87-107 form a helical membrane-spanning segment; that stretch reads FGAGMAILSLLLKPLSCCFVY. Over 108 to 152 the chain is Cytoplasmic; it reads HMYRQRGGFLGSSQDRSAYQTIDSAEAPANAFAVPEGRGQDARGY. 2 positions are modified to phosphoserine: serine 119 and serine 120. Position 128 is a phosphothreonine (threonine 128). Phosphoserine is present on serine 131.

As to quaternary structure, interacts with RACK1, and with the carboxy-terminal region of AGTR1.

It is found in the endoplasmic reticulum membrane. It localises to the golgi apparatus membrane. The protein resides in the cytoplasmic vesicle membrane. In terms of biological role, appears to be a negative regulator of type-1 angiotensin II receptor-mediated signaling by regulating receptor internalization as well as mechanism of receptor desensitization such as phosphorylation. Also induces a decrease in cell proliferation and angiotensin II-stimulated transcriptional activity. The polypeptide is Type-1 angiotensin II receptor-associated protein (AGTRAP) (Pongo abelii (Sumatran orangutan)).